The sequence spans 427 residues: uncharacterized protein (427 aa).

The protein belongs to the CAF1 family.

This is an uncharacterized protein from Schizosaccharomyces pombe (strain 972 / ATCC 24843) (Fission yeast).